A 102-amino-acid polypeptide reads, in one-letter code: Small ribosomal subunit protein uS10 (102 aa).

The protein belongs to the universal ribosomal protein uS10 family. In terms of assembly, part of the 30S ribosomal subunit.

In terms of biological role, involved in the binding of tRNA to the ribosomes. The sequence is that of Small ribosomal subunit protein uS10 from Hyperthermus butylicus (strain DSM 5456 / JCM 9403 / PLM1-5).